The primary structure comprises 591 residues: V-type ATP synthase alpha chain (591 aa).

G242–T249 lines the ATP pocket.

The protein belongs to the ATPase alpha/beta chains family.

It catalyses the reaction ATP + H2O + 4 H(+)(in) = ADP + phosphate + 5 H(+)(out). Produces ATP from ADP in the presence of a proton gradient across the membrane. The V-type alpha chain is a catalytic subunit. This chain is V-type ATP synthase alpha chain, found in Chlamydia caviae (strain ATCC VR-813 / DSM 19441 / 03DC25 / GPIC) (Chlamydophila caviae).